The following is a 549-amino-acid chain: MPPKSTTTKHIFVTGGVASSLGKGLTASSLGMLLKARGLRVVMQKLDPYLNVDPGTMNPFQHGEVFVTNDGAETDLDIGHYERFLDRDLDGSANVTTGQVYSTVIAKERRGEYLGDTVQVIPHITNEIKHRIRRMATDEVDVVITEVGGTVGDIESLPFLETVRQVRHEVGRDNVFVVHISLLPYIGPSGELKTKPTQHSVAALRNIGIQPDAIVLRCDREVPTAIKRKISLMCDVDEAAVVACPDARSIYDIPKTVHGEGLDAYVVRKLDLPFRDVDWTTWDDLLDRVHKPDHEINLALVGKYIDLPDAYLSVTEALRAGGFANRARVKIKWVTSDDCKTPAGAAGQLGDVDAICIPGGFGDRGVSGKVGAIQYAREHRIPLLGLCLGLQCIVIEAARNLADIPDANSTEFDSATGHPVISTMAEQLDIVAGEGDMGGTMRLGMYPAKLAEGSIVREVYDGKEYVEERHRHRYEVNNAYRAELEKKAGLQFSGTSPDGKLVEYVEYPREVHPYLVATQAHPELRSRPTRPHPLFAGLVKAAVERKTGK.

Positions 1–272 (MPPKSTTTKH…DAYVVRKLDL (272 aa)) are amidoligase domain. Serine 19 lines the CTP pocket. Residue serine 19 participates in UTP binding. ATP-binding positions include 20–25 (SLGKGL) and aspartate 77. Residues aspartate 77 and glutamate 146 each coordinate Mg(2+). CTP-binding positions include 153-155 (DIE), 193-198 (KTKPTQ), and lysine 229. Residues 193–198 (KTKPTQ) and lysine 229 contribute to the UTP site. The Glutamine amidotransferase type-1 domain occupies 297 to 548 (NLALVGKYID…VKAAVERKTG (252 aa)). Glycine 360 contributes to the L-glutamine binding site. Cysteine 387 functions as the Nucleophile; for glutamine hydrolysis in the catalytic mechanism. L-glutamine is bound by residues 388–391 (LGLQ), glutamate 411, and arginine 473. Active-site residues include histidine 521 and glutamate 523.

This sequence belongs to the CTP synthase family. In terms of assembly, homotetramer.

It catalyses the reaction UTP + L-glutamine + ATP + H2O = CTP + L-glutamate + ADP + phosphate + 2 H(+). It carries out the reaction L-glutamine + H2O = L-glutamate + NH4(+). The enzyme catalyses UTP + NH4(+) + ATP = CTP + ADP + phosphate + 2 H(+). It functions in the pathway pyrimidine metabolism; CTP biosynthesis via de novo pathway; CTP from UDP: step 2/2. Its activity is regulated as follows. Allosterically activated by GTP, when glutamine is the substrate; GTP has no effect on the reaction when ammonia is the substrate. The allosteric effector GTP functions by stabilizing the protein conformation that binds the tetrahedral intermediate(s) formed during glutamine hydrolysis. Inhibited by the product CTP, via allosteric rather than competitive inhibition. Catalyzes the ATP-dependent amination of UTP to CTP with either L-glutamine or ammonia as the source of nitrogen. Regulates intracellular CTP levels through interactions with the four ribonucleotide triphosphates. The protein is CTP synthase of Streptomyces avermitilis (strain ATCC 31267 / DSM 46492 / JCM 5070 / NBRC 14893 / NCIMB 12804 / NRRL 8165 / MA-4680).